Here is a 158-residue protein sequence, read N- to C-terminus: Urease accessory protein UreE (158 aa).

The protein belongs to the UreE family.

It localises to the cytoplasm. Its function is as follows. Involved in urease metallocenter assembly. Binds nickel. Probably functions as a nickel donor during metallocenter assembly. The polypeptide is Urease accessory protein UreE (Klebsiella pneumoniae subsp. pneumoniae (strain ATCC 700721 / MGH 78578)).